Reading from the N-terminus, the 254-residue chain is GTP cyclohydrolase 1 type 2 homolog (254 aa).

Residues histidine 68, histidine 69, aspartate 106, histidine 222, and glutamate 226 each coordinate a divalent metal cation.

This sequence belongs to the GTP cyclohydrolase I type 2/NIF3 family. Homohexamer.

The sequence is that of GTP cyclohydrolase 1 type 2 homolog from Allochromatium vinosum (strain ATCC 17899 / DSM 180 / NBRC 103801 / NCIMB 10441 / D) (Chromatium vinosum).